A 152-amino-acid chain; its full sequence is Nuclear cap-binding protein subunit 2 (152 aa).

Residues Y8, Y31, 100-104 (RTDWD), 111-115 (RQFGR), and 121-122 (QV) each bind mRNA. Positions 28-106 (TTLYVGNMSF…RIIRTDWDAG (79 aa)) constitute an RRM domain.

The protein belongs to the RRM NCBP2 family. Component of the nuclear cap-binding complex (CBC), a heterodimer composed of Cbp80 and Cbp20 that interacts with m7GpppG-capped RNA.

It localises to the nucleus. Its function is as follows. Component of the cap-binding complex (CBC), which binds co-transcriptionally to the 5' cap of pre-mRNAs and is involved in various processes such as pre-mRNA splicing and RNA-mediated gene silencing (RNAi). The CBC complex is involved in miRNA-mediated RNA interference and is required for primary microRNAs (miRNAs) processing. Also involved in innate immunity via the short interfering RNAs (siRNAs) processing machinery by restricting the viral RNA production. In the CBC complex, Cbp20 recognizes and binds capped RNAs (m7GpppG-capped RNA) but requires Cbp80 to stabilize the movement of its N-terminal loop and lock the CBC into a high affinity cap-binding state with the cap structure. This chain is Nuclear cap-binding protein subunit 2 (Cbp20), found in Ixodes scapularis (Black-legged tick).